Reading from the N-terminus, the 181-residue chain is Probable pyruvoyl-dependent arginine decarboxylase (181 aa).

At Ser-43 the chain carries Pyruvic acid (Ser).

Belongs to the PdaD family. Pyruvate serves as cofactor.

It carries out the reaction L-arginine + H(+) = agmatine + CO2. The sequence is that of Probable pyruvoyl-dependent arginine decarboxylase from Prosthecochloris aestuarii (strain DSM 271 / SK 413).